We begin with the raw amino-acid sequence, 250 residues long: tRNA (guanine-N(1)-)-methyltransferase (250 aa).

S-adenosyl-L-methionine-binding positions include glycine 114 and 134-139; that span reads IGDYVL.

This sequence belongs to the RNA methyltransferase TrmD family. As to quaternary structure, homodimer.

Its subcellular location is the cytoplasm. It carries out the reaction guanosine(37) in tRNA + S-adenosyl-L-methionine = N(1)-methylguanosine(37) in tRNA + S-adenosyl-L-homocysteine + H(+). Specifically methylates guanosine-37 in various tRNAs. The polypeptide is tRNA (guanine-N(1)-)-methyltransferase (Moorella thermoacetica (strain ATCC 39073 / JCM 9320)).